Here is a 154-residue protein sequence, read N- to C-terminus: Lipoprotein signal peptidase (154 aa).

A run of 3 helical transmembrane segments spans residues 7 to 27 (VLYLVISLLVVIADQGLKNYI), 58 to 78 (IFSGQMILFYLISIAAIAVVV), and 88 to 108 (NWLFDTGLALVLGGIIGNFID). Catalysis depends on residues D117 and D133. The helical transmembrane segment at 128–148 (IFNIADSAITVGIVLVFIYLI) threads the bilayer.

It belongs to the peptidase A8 family.

It is found in the cell membrane. It catalyses the reaction Release of signal peptides from bacterial membrane prolipoproteins. Hydrolyzes -Xaa-Yaa-Zaa-|-(S,diacylglyceryl)Cys-, in which Xaa is hydrophobic (preferably Leu), and Yaa (Ala or Ser) and Zaa (Gly or Ala) have small, neutral side chains.. It participates in protein modification; lipoprotein biosynthesis (signal peptide cleavage). Functionally, this protein specifically catalyzes the removal of signal peptides from prolipoproteins. This is Lipoprotein signal peptidase from Lactobacillus gasseri (strain ATCC 33323 / DSM 20243 / BCRC 14619 / CIP 102991 / JCM 1131 / KCTC 3163 / NCIMB 11718 / NCTC 13722 / AM63).